The following is a 173-amino-acid chain: Adenine phosphoribosyltransferase (173 aa).

Belongs to the purine/pyrimidine phosphoribosyltransferase family. As to quaternary structure, homodimer.

Its subcellular location is the cytoplasm. The catalysed reaction is AMP + diphosphate = 5-phospho-alpha-D-ribose 1-diphosphate + adenine. It participates in purine metabolism; AMP biosynthesis via salvage pathway; AMP from adenine: step 1/1. Catalyzes a salvage reaction resulting in the formation of AMP, that is energically less costly than de novo synthesis. This is Adenine phosphoribosyltransferase from Listeria monocytogenes serotype 4b (strain CLIP80459).